A 163-amino-acid polypeptide reads, in one-letter code: UPF0262 protein RPA4530 (163 aa).

It belongs to the UPF0262 family.

The sequence is that of UPF0262 protein RPA4530 from Rhodopseudomonas palustris (strain ATCC BAA-98 / CGA009).